The following is a 965-amino-acid chain: Phosphatidylethanolamine N-methyltransferase (965 aa).

Residues 1–82 (MDRGLSTGTN…SPSEPKNLSD (82 aa)) lie on the Lumenal side of the membrane. Positions 34–54 (PTVTNASNGKDKAGKTFGRTP) are disordered. A helical membrane pass occupies residues 83–103 (LVVLTILAGHIFLLWILPSGA). The Cytoplasmic segment spans residues 104–106 (KIP). A helical transmembrane segment spans residues 107–127 (VFAVIYLFWRSCYNAGIGWLL). Over 128–192 (HNQSHHKTLV…EYNTWLVFRR (65 aa)) the chain is Lumenal. A helical transmembrane segment spans residues 193–213 (LVDLILMCDFASYCLFAIACS). Over 214-220 (RHPANES) the chain is Cytoplasmic. The helical transmembrane segment at 221–241 (VLMTVIRWTSGIALVLFNLWV) threads the bilayer. The Lumenal portion of the chain corresponds to 242–274 (KLDAHRVVKDYAWYWGDFFYLIDQELTFDGVFE). Residues 275 to 295 (MAPHPMYSVGYAGYYGISLMA) traverse the membrane as a helical segment. Topologically, residues 296–297 (AS) are cytoplasmic. Residues 298 to 318 (YKVLFISIIAHAAQFAFLVLV) form a helical membrane-spanning segment. The Lumenal segment spans residues 319-394 (ENPHIDKTYN…LDLHRITDTS (76 aa)). The disordered stretch occupies residues 326-368 (TYNPPPPRKRTITEHDAASQRSQSPDTPNAPSVSEENVPNATT). A compositionally biased stretch (polar residues) spans 344 to 368 (SQRSQSPDTPNAPSVSEENVPNATT). Residues 395–415 (SILVQFLMFSLTVLTPSTPWY) traverse the membrane as a helical segment. Residue glutamine 416 is a topological domain, cytoplasmic. Residues 417 to 437 (FLFVANAAIWRLWYSVGIGYL) form a helical membrane-spanning segment. Residues 438–470 (LNRQSNCKSWTRHFVKYGETPHEAWNQWKGTYH) are Lumenal-facing. Residues 471-491 (LSMVMCYASFISAVWKMYTLP) form a helical membrane-spanning segment. The Cytoplasmic segment spans residues 492-503 (SNWGYGLAILRH). The helical transmembrane segment at 504 to 524 (VLGAGLISLQIWTSVSIYESL) threads the bilayer. Residues 525-559 (GEFGWFYGDFFFDESPKLTYNGIYRFLNNPERVLG) are Lumenal-facing. The helical transmembrane segment at 560–580 (LAGVWGAVLITASGTVAFLAF) threads the bilayer. The Cytoplasmic segment spans residues 581–965 (LSHILSLGFI…GATTPTESKE (385 aa)).

This sequence belongs to the class VI-like SAM-binding methyltransferase superfamily. CHO2 family.

It localises to the endoplasmic reticulum membrane. The catalysed reaction is a 1,2-diacyl-sn-glycero-3-phosphoethanolamine + S-adenosyl-L-methionine = a 1,2-diacyl-sn-glycero-3-phospho-N-methylethanolamine + S-adenosyl-L-homocysteine + H(+). Its pathway is phospholipid metabolism; phosphatidylcholine biosynthesis. Catalyzes the first step of the methylation pathway of phosphatidylcholine biosynthesis, the SAM-dependent methylation of phosphatidylethanolamine (PE) to phosphatidylmonomethylethanolamine (PMME). The protein is Phosphatidylethanolamine N-methyltransferase of Emericella nidulans (strain FGSC A4 / ATCC 38163 / CBS 112.46 / NRRL 194 / M139) (Aspergillus nidulans).